The primary structure comprises 648 residues: Macrolide export ATP-binding/permease protein MacB (648 aa).

The region spanning 5 to 243 is the ABC transporter domain; that stretch reads LELKDIRRSY…AGGTEPVVNT (239 aa). Position 41-48 (41-48) interacts with ATP; the sequence is GASGSGKS. A run of 4 helical transmembrane segments spans residues 273–293, 523–543, 576–596, and 611–631; these read LLTM…VVVG, LFMT…VMNI, AVLV…LIAF, and PLAL…FGWL.

The protein belongs to the ABC transporter superfamily. Macrolide exporter (TC 3.A.1.122) family. In terms of assembly, homodimer. Part of the tripartite efflux system MacAB-TolC, which is composed of an inner membrane transporter, MacB, a periplasmic membrane fusion protein, MacA, and an outer membrane component, TolC. The complex forms a large protein conduit and can translocate molecules across both the inner and outer membranes. Interacts with MacA.

The protein localises to the cell inner membrane. Functionally, part of the tripartite efflux system MacAB-TolC. MacB is a non-canonical ABC transporter that contains transmembrane domains (TMD), which form a pore in the inner membrane, and an ATP-binding domain (NBD), which is responsible for energy generation. Confers resistance against macrolides. The sequence is that of Macrolide export ATP-binding/permease protein MacB from Escherichia coli O157:H7.